The following is a 158-amino-acid chain: Endoribonuclease YbeY (158 aa).

3 residues coordinate Zn(2+): histidine 124, histidine 128, and histidine 134.

Belongs to the endoribonuclease YbeY family. It depends on Zn(2+) as a cofactor.

It localises to the cytoplasm. In terms of biological role, single strand-specific metallo-endoribonuclease involved in late-stage 70S ribosome quality control and in maturation of the 3' terminus of the 16S rRNA. This Caldanaerobacter subterraneus subsp. tengcongensis (strain DSM 15242 / JCM 11007 / NBRC 100824 / MB4) (Thermoanaerobacter tengcongensis) protein is Endoribonuclease YbeY.